Reading from the N-terminus, the 63-residue chain is Cytochrome c oxidase subunit 5C (63 aa).

Residues 16-34 (VVKEIFIGLTLGLVAGGMW) traverse the membrane as a helical segment.

The protein belongs to the cytochrome c oxidase subunit 5C family.

It localises to the mitochondrion inner membrane. This protein is one of the nuclear-coded polypeptide chains of cytochrome c oxidase, the terminal oxidase in mitochondrial electron transport. The sequence is that of Cytochrome c oxidase subunit 5C (COX5C) from Hordeum vulgare (Barley).